The following is a 185-amino-acid chain: MGKHHWKIEKQPEWYVKAVRKTIAALPSGYAEAADWLDVTENALFNRLRADGDQIFPLGWAMVLQRAGGTHFIADAVAQSANGVFVSLPDVEDVDNADINQRLLEVIEQIGSYSKQIRSAIEDGVVEPHEKTAINDELYLSISKLQEHAALVYKIFCISESNDARECAAPGVVASIASGCGETNA.

This is an uncharacterized protein from Escherichia coli (strain K12).